A 331-amino-acid polypeptide reads, in one-letter code: Probable cytosolic iron-sulfur protein assembly protein Ciao1 (331 aa).

WD repeat units follow at residues 12 to 51 (GHKG…WTTK), 57 to 96 (GHKR…ATLE), 97 to 136 (GHEN…EFEC), 142 to 181 (AHSQ…SDWD), 188 to 227 (SHTS…NDAG), 246 to 285 (EHSR…KRDA), and 297 to 331 (AHEQ…KLQE).

The protein belongs to the WD repeat CIA1 family.

Its function is as follows. Essential component of the cytosolic iron-sulfur (Fe/S) protein assembly machinery. Required for the maturation of extramitochondrial Fe/S proteins. This chain is Probable cytosolic iron-sulfur protein assembly protein Ciao1, found in Drosophila virilis (Fruit fly).